The primary structure comprises 164 residues: Lipoprotein signal peptidase (164 aa).

The next 3 helical transmembrane spans lie at 12–32 (WLWL…LILQ), 70–90 (WFFA…MYRS), and 102–122 (ALII…GFVV). Active-site residues include aspartate 123 and aspartate 141. The helical transmembrane segment at 137-157 (FNLADTAICVGAALIVLEGFL) threads the bilayer.

It belongs to the peptidase A8 family.

The protein localises to the cell inner membrane. It catalyses the reaction Release of signal peptides from bacterial membrane prolipoproteins. Hydrolyzes -Xaa-Yaa-Zaa-|-(S,diacylglyceryl)Cys-, in which Xaa is hydrophobic (preferably Leu), and Yaa (Ala or Ser) and Zaa (Gly or Ala) have small, neutral side chains.. It participates in protein modification; lipoprotein biosynthesis (signal peptide cleavage). This protein specifically catalyzes the removal of signal peptides from prolipoproteins. The sequence is that of Lipoprotein signal peptidase from Shigella flexneri.